The sequence spans 223 residues: PKHD-type hydroxylase CPS_3426 (223 aa).

Residues 77-175 (KSMMPFIISE…RKVALTWIES (99 aa)) form the Fe2OG dioxygenase domain. Residues H96, D98, and H156 each coordinate Fe cation. R166 is a 2-oxoglutarate binding site.

Fe(2+) is required as a cofactor. The cofactor is L-ascorbate.

The chain is PKHD-type hydroxylase CPS_3426 from Colwellia psychrerythraea (strain 34H / ATCC BAA-681) (Vibrio psychroerythus).